The following is a 318-amino-acid chain: Ubiquitin-like domain-containing CTD phosphatase 1 (318 aa).

Ala2 carries the post-translational modification N-acetylalanine. The region spanning 3–81 is the Ubiquitin-like domain; that stretch reads LPIIVKWGGQ…IMMMGTREES (79 aa). At Lys117 the chain carries N6-acetyllysine. The FCP1 homology domain occupies 133-294; sequence PREGKKLLVL…LKLTQYLKEI (162 aa). 3 residues coordinate Mg(2+): Asp143, Asp145, and Asp253.

Mg(2+) is required as a cofactor.

It is found in the nucleus. The enzyme catalyses O-phospho-L-seryl-[protein] + H2O = L-seryl-[protein] + phosphate. It carries out the reaction O-phospho-L-threonyl-[protein] + H2O = L-threonyl-[protein] + phosphate. Dephosphorylates 26S nuclear proteasomes, thereby decreasing their proteolytic activity. Recruited to the 19S regulatory particle of the 26S proteasome through its interaction with 19S component PSMD2/RPN1. Once recruited, dephosphorylates 19S component PSMC2/RPT1 which impairs PSMC2 ATPase activity and disrupts 26S proteasome assembly. Has also been reported to stimulate the proteolytic activity of the 26S proteasome. The polypeptide is Ubiquitin-like domain-containing CTD phosphatase 1 (UBLCP1) (Pongo abelii (Sumatran orangutan)).